We begin with the raw amino-acid sequence, 110 residues long: U1-lycotoxin-Ls1hh (110 aa).

The N-terminal stretch at 1–20 (MKFVLLFGVLLVTLFSYSSA) is a signal peptide. The propeptide occupies 21–44 (EMLDDFDQADEDELLSLIEKEEAR). 4 disulfide bridges follow: C47–C62, C54–C71, C61–C89, and C73–C87.

It belongs to the neurotoxin 19 (CSTX) family. 03 subfamily. In terms of tissue distribution, expressed by the venom gland.

It is found in the secreted. The protein is U1-lycotoxin-Ls1hh of Lycosa singoriensis (Wolf spider).